Reading from the N-terminus, the 445-residue chain is Putative diacyglycerol O-acyltransferase Rv2285 (445 aa).

Histidine 135 functions as the Proton acceptor in the catalytic mechanism.

Belongs to the long-chain O-acyltransferase family.

It carries out the reaction an acyl-CoA + a 1,2-diacyl-sn-glycerol = a triacyl-sn-glycerol + CoA. It catalyses the reaction di-(9Z)-octadecenoylglycerol + (9Z)-octadecenoyl-CoA = 1,2,3-tri-(9Z-octadecenoyl)-glycerol + CoA. It functions in the pathway glycerolipid metabolism; triacylglycerol biosynthesis. Functionally, catalyzes the terminal and only committed step in triacylglycerol synthesis by using diacylglycerol and fatty acyl CoA as substrates. Required for storage lipid synthesis. Upon expression in E.coli functions weakly as a triacylglycerol synthase, making triacylglycerol (TG) from diolein and long-chain fatty acyl-CoA. Has very weak wax synthase activity, incorporating palmityl alcohol into wax esters in the presence of palmitoyl-CoA. The polypeptide is Putative diacyglycerol O-acyltransferase Rv2285 (Mycobacterium tuberculosis (strain ATCC 25618 / H37Rv)).